The chain runs to 296 residues: MALTSDLGKQIKLKEVEGTLLQPATVDNWSQIQSFEAKPDDLLICTYPKAGTTWIQEIVDMIEQNGDVEKCQRAIIQHRHPFIEWARPPQPSGVEKAKAMPSPRILKTHLSTQLLPPSFWENNCKFLYVARNAKDCMVSYYHFQRMNHMLPDPGTWEEYFETFINGKVVWGSWFDHVKGWWEMKDRHQILFLFYEDIKRDPKHEIRKVMQFMGKKVDETVLDKIVQETSFEKMKENPMTNRSTVSKSILDQSISSFMRKGTVGDWKNHFTVAQNERFDEIYRRKMEGTSINFCMEL.

49–54 serves as a coordination point for 3'-phosphoadenylyl sulfate; it reads KAGTTW. 107–109 is a substrate binding site; sequence KTH. Residue His109 is the Proton acceptor of the active site. 3'-phosphoadenylyl sulfate-binding positions include Arg131, Ser139, Tyr194, and 228-233; that span reads TSFEKM. Ser139 carries the phosphoserine modification. A Phosphoserine modification is found at Ser254. Position 256 to 260 (256 to 260) interacts with 3'-phosphoadenylyl sulfate; the sequence is FMRKG.

Belongs to the sulfotransferase 1 family. In terms of tissue distribution, found in adult stomach, kidney and thyroid gland, and in fetal kidney and liver.

The protein resides in the cytoplasm. Its subcellular location is the lysosome. It is found in the mitochondrion. It carries out the reaction a phenol + 3'-phosphoadenylyl sulfate = an aryl sulfate + adenosine 3',5'-bisphosphate + H(+). It catalyses the reaction cholesterol + 3'-phosphoadenylyl sulfate = cholesterol sulfate + adenosine 3',5'-bisphosphate + H(+). In terms of biological role, sulfotransferase that utilizes 3'-phospho-5'-adenylyl sulfate (PAPS) to catalyze the sulfate conjugation of phenolic compounds. Does not transfer sulfate to steroids, dopamine, acetaminophen, or alpha-naphthol. Except in mitochondria, where it can add sulfate to cholesterol producing cholesterol sulfate, which alters mitochondrial membrane organization, and impacts protein complex mobility increasing state-III respiration, thereby modulating mitochondrial respiration. Catalyzes the sulfation of the carcinogenic N-hydroxy-2-acetylaminofluorene leading to highly reactive intermediates capable of forming DNA adducts, potentially resulting in mutagenesis. The polypeptide is Sulfotransferase 1C2 (SULT1C2) (Homo sapiens (Human)).